The sequence spans 320 residues: Homeobox-leucine zipper protein HOX25 (320 aa).

Residues 79–139 (AAARKRRLTA…NRRARWKTKQ (61 aa)) constitute a DNA-binding region (homeobox). The segment at 138-182 (KQLELDFDRLRAAHDELLAGRTALAADNESLRSQVILLTEKLQAN) is leucine-zipper. Disordered stretches follow at residues 181–209 (ANGK…KSFQ) and 249–282 (DSPE…PSSS). Residues 265 to 278 (SEDDCGGAGSDDDY) are compositionally biased toward acidic residues.

This sequence belongs to the HD-ZIP homeobox family. Class I subfamily. Expressed in roots, leaf sheaths and blades and panicles.

Its subcellular location is the nucleus. Probable transcription factor. The protein is Homeobox-leucine zipper protein HOX25 (HOX25) of Oryza sativa subsp. japonica (Rice).